We begin with the raw amino-acid sequence, 288 residues long: Beta-lactamase CARB-3 (288 aa).

A signal peptide spans 1 to 17 (MKFLLAFSLLIPSVVFA). Ser65 functions as the Acyl-ester intermediate in the catalytic mechanism. A disulfide bridge connects residues Cys72 and Cys118. 229 to 231 (RSG) provides a ligand contact to substrate.

It belongs to the class-A beta-lactamase family.

It carries out the reaction a beta-lactam + H2O = a substituted beta-amino acid. Functionally, hydrolyzes both carbenicillin and oxacillin. In Pseudomonas aeruginosa, this protein is Beta-lactamase CARB-3 (carB3).